The primary structure comprises 148 residues: Glutamyl-tRNA(Gln) amidotransferase subunit C, mitochondrial (148 aa).

The protein belongs to the GatC family. In terms of assembly, subunit of the heterotrimeric GatCAB amidotransferase (AdT) complex, composed of A, B and C subunits.

The protein localises to the mitochondrion. The enzyme catalyses L-glutamyl-tRNA(Gln) + L-glutamine + ATP + H2O = L-glutaminyl-tRNA(Gln) + L-glutamate + ADP + phosphate + H(+). Functionally, allows the formation of correctly charged Gln-tRNA(Gln) through the transamidation of misacylated Glu-tRNA(Gln) in the mitochondria. The reaction takes place in the presence of glutamine and ATP through an activated gamma-phospho-Glu-tRNA(Gln). This chain is Glutamyl-tRNA(Gln) amidotransferase subunit C, mitochondrial, found in Drosophila sechellia (Fruit fly).